Consider the following 233-residue polypeptide: Antiholin-like protein LrgB (233 aa).

A run of 7 helical transmembrane segments spans residues 7–27 (INTPYFGILLSLIPFIIATFL), 33–53 (GFFLFTPLFVSMVVGIAFLKL), 63–83 (IGGDIINFFLEPATICFAIPL), 97–117 (ILGGITLGTTAALVCIYLIAE), 124–144 (GIIASMLPQGATTAIALPVSA), 152–172 (LTSLAVILNGVIIYALGSKLI), and 212–232 (ISLVIVGVIVVIVAPILATLL).

It belongs to the CidB/LrgB family. LrgB subfamily.

The protein localises to the cell membrane. Its function is as follows. Inhibits the expression or activity of extracellular murein hydrolases by interacting, possibly with LrgA, with the holin-like proteins CidA and/or CidB. The LrgAB and CidAB proteins may affect the proton motive force of the membrane. May be involved in programmed cell death (PCD), possibly triggering PCD in response to antibiotics and environmental stresses. This Staphylococcus saprophyticus subsp. saprophyticus (strain ATCC 15305 / DSM 20229 / NCIMB 8711 / NCTC 7292 / S-41) protein is Antiholin-like protein LrgB.